The following is a 618-amino-acid chain: Sphingomyelin phosphodiesterase 2 (618 aa).

The first 22 residues, 1-22, serve as a signal peptide directing secretion; sequence MQQPLIILGIGIVLALVSNVES. One can recognise a Saposin B-type domain in the interval 68–151; sequence RKMSCLFCTF…AFIANCGHSD (84 aa). Disulfide bonds link C72-C147, C75-C140, and C103-C114. N89 carries N-linked (GlcNAc...) asparagine glycosylation. N-linked (GlcNAc...) asparagine glycosylation occurs at N159. Residues D189 and H191 each contribute to the Zn(2+) site. Disulfide bonds link C204-C216 and C217-C249. Zn(2+) is bound at residue D278. A glycan (N-linked (GlcNAc...) asparagine) is linked at N298. Residues N318, H427, H461, and H463 each contribute to the Zn(2+) site. C387 and C435 are joined by a disulfide. N525 and N568 each carry an N-linked (GlcNAc...) asparagine glycan. Intrachain disulfides connect C588-C594 and C600-C613.

This sequence belongs to the acid sphingomyelinase family. It depends on Zn(2+) as a cofactor.

The protein resides in the secreted. The catalysed reaction is a sphingomyelin + H2O = phosphocholine + an N-acylsphing-4-enine + H(+). The enzyme catalyses an N-acyl-15-methylhexadecasphing-4-enine-1-phosphocholine + H2O = an N-acyl-15-methylhexadecasphing-4-enine + phosphocholine + H(+). Its pathway is lipid metabolism; sphingolipid metabolism. Its function is as follows. Sphingomyelin phosphodiesterase (sphingomyelinase) that converts sphingomyelin (N-acyl-sphingoid-1-phosphocholine) to ceramide (N-acyl-sphingoid base) and phosphocholine at acidic pH. Displays its enzymatic activity when secreted. May play distinct roles in signaling. This is Sphingomyelin phosphodiesterase 2 (asm-2) from Caenorhabditis elegans.